The following is a 389-amino-acid chain: Acetate kinase (389 aa).

Residue asparagine 7 participates in Mg(2+) binding. ATP is bound at residue lysine 14. Arginine 88 lines the substrate pocket. Aspartate 145 serves as the catalytic Proton donor/acceptor. Residues 205-209 (HLGNG), 279-281 (DLR), and 324-328 (GIGEN) each bind ATP. Glutamate 375 contributes to the Mg(2+) binding site.

This sequence belongs to the acetokinase family. As to quaternary structure, homodimer. The cofactor is Mg(2+). Mn(2+) is required as a cofactor.

It is found in the cytoplasm. The enzyme catalyses acetate + ATP = acetyl phosphate + ADP. The protein operates within metabolic intermediate biosynthesis; acetyl-CoA biosynthesis; acetyl-CoA from acetate: step 1/2. Its function is as follows. Catalyzes the formation of acetyl phosphate from acetate and ATP. Can also catalyze the reverse reaction. This is Acetate kinase from Sulfurimonas denitrificans (strain ATCC 33889 / DSM 1251) (Thiomicrospira denitrificans (strain ATCC 33889 / DSM 1251)).